A 61-amino-acid chain; its full sequence is Photosystem II reaction center protein K (61 aa).

The propeptide occupies 1 to 24 (MLNIFSLICICLNSALHSSSFFFA). The chain crosses the membrane as a helical span at residues 32-52 (FFNPIVDFMPVIPVLFFLLAL).

The protein belongs to the PsbK family. In terms of assembly, PSII is composed of 1 copy each of membrane proteins PsbA, PsbB, PsbC, PsbD, PsbE, PsbF, PsbH, PsbI, PsbJ, PsbK, PsbL, PsbM, PsbT, PsbX, PsbY, PsbZ, Psb30/Ycf12, at least 3 peripheral proteins of the oxygen-evolving complex and a large number of cofactors. It forms dimeric complexes.

It localises to the plastid. The protein localises to the chloroplast thylakoid membrane. One of the components of the core complex of photosystem II (PSII). PSII is a light-driven water:plastoquinone oxidoreductase that uses light energy to abstract electrons from H(2)O, generating O(2) and a proton gradient subsequently used for ATP formation. It consists of a core antenna complex that captures photons, and an electron transfer chain that converts photonic excitation into a charge separation. The sequence is that of Photosystem II reaction center protein K from Drimys granadensis.